The chain runs to 333 residues: Sphingomyelinase C (333 aa).

The N-terminal stretch at 1–27 is a signal peptide; sequence MKGKLLKGVLSLGVGLGALYSGTSAQA. Cysteines 150 and 186 form a disulfide.

This sequence belongs to the neutral sphingomyelinase family. The cofactor is Mg(2+).

It localises to the secreted. It carries out the reaction a sphingomyelin + H2O = phosphocholine + an N-acylsphing-4-enine + H(+). Activated by cobalt and manganese ions. Functionally, required, with sphingomyelinase, to effect target cell lysis (hemolysis). The chain is Sphingomyelinase C (sph) from Bacillus cereus.